A 253-amino-acid chain; its full sequence is Rab GTPase-activating protein 1-like, isoform 10 (253 aa).

The stretch at 8–222 (SMTFEERENR…MNEIQAAKNS (215 aa)) forms a coiled coil. Residues 233–253 (TATGTQPLQPAPVTQPPKEST) are disordered.

This Homo sapiens (Human) protein is Rab GTPase-activating protein 1-like, isoform 10 (RABGAP1L).